A 210-amino-acid polypeptide reads, in one-letter code: Outer-membrane lipoprotein LolB (210 aa).

An N-terminal signal peptide occupies residues 1-26 (MSKLKIDTKRRFSLLIALVLIISLSS). The N-palmitoyl cysteine moiety is linked to residue C27. C27 carries S-diacylglycerol cysteine lipidation.

Belongs to the LolB family. As to quaternary structure, monomer.

The protein resides in the cell outer membrane. Plays a critical role in the incorporation of lipoproteins in the outer membrane after they are released by the LolA protein. The sequence is that of Outer-membrane lipoprotein LolB from Francisella tularensis subsp. holarctica (strain FTNF002-00 / FTA).